A 261-amino-acid polypeptide reads, in one-letter code: uncharacterized protein (261 aa).

The tract at residues 1–22 is disordered; that stretch reads MAETTEPPSDAGTSQADAMALA. A helical transmembrane segment spans residues 107–127; sequence IAMAAAVVIICGFTGLSGYIV.

To M.tuberculosis Rv1362c.

It is found in the membrane. This is an uncharacterized protein from Mycobacterium tuberculosis (strain ATCC 25618 / H37Rv).